The following is a 582-amino-acid chain: Enhancer of polycomb-like protein 1 (582 aa).

The stretch at 238–295 (RDAQSADKLRRLRKELEDARQLVALVRQRELARKEMLSMERQIFLQRSEVKEMKRKLN) forms a coiled coil. The disordered stretch occupies residues 323-351 (PEQPKKKPAEAPAAQRPTAPQIRMPQKPG). The stretch at 352–385 (TQAADDMQLLEDVQAEKENEILRDIKQNIAKHIK) forms a coiled coil. The segment covering 539 to 555 (AQAHAQAQAQKRLQAEQ) has biased composition (low complexity). The disordered stretch occupies residues 539–582 (AQAHAQAQAQKRLQAEQTTTNNGPPNIGHTMGSNPGPGAVASTS).

It belongs to the enhancer of polycomb family. In terms of assembly, component of the NuA4 histone acetyltransferase complex.

The protein localises to the nucleus. Component of the NuA4 histone acetyltransferase complex which is involved in transcriptional activation of selected genes principally by acetylation of nucleosomal histone H4 and H2A. The NuA4 complex is also involved in DNA repair. Involved in gene silencing by neighboring heterochromatin, blockage of the silencing spreading along the chromosome, and required for cell cycle progression through G2/M. The protein is Enhancer of polycomb-like protein 1 (epl1) of Aspergillus fumigatus (strain ATCC MYA-4609 / CBS 101355 / FGSC A1100 / Af293) (Neosartorya fumigata).